The chain runs to 124 residues: Splicing factor 3B subunit 6-like protein (124 aa).

Residues E16 to N29 are interaction with pre-mRNA branch site. Residues R19–H94 form the RRM domain.

It localises to the nucleus. In terms of biological role, may be necessary for the splicing of pre-mRNA. The polypeptide is Splicing factor 3B subunit 6-like protein (Arabidopsis thaliana (Mouse-ear cress)).